The chain runs to 246 residues: Flagellar L-ring protein (246 aa).

The first 20 residues, 1 to 20, serve as a signal peptide directing secretion; sequence MMQKCLSPKTLIAALVVLSA. A lipid anchor (N-palmitoyl cysteine) is attached at Cys21. The S-diacylglycerol cysteine moiety is linked to residue Cys21.

The protein belongs to the FlgH family. The basal body constitutes a major portion of the flagellar organelle and consists of four rings (L,P,S, and M) mounted on a central rod.

The protein localises to the cell outer membrane. It localises to the bacterial flagellum basal body. Assembles around the rod to form the L-ring and probably protects the motor/basal body from shearing forces during rotation. In Ruegeria pomeroyi (strain ATCC 700808 / DSM 15171 / DSS-3) (Silicibacter pomeroyi), this protein is Flagellar L-ring protein.